The following is a 180-amino-acid chain: MSALTIFADNGASEPLWQSTDADAIREQLNAQGVRFERWQADRELGDNPTPETVLTAYQHAIDLLVAEKGYQSWDVISMRADNPQKEALRDKFLNEHTHGEDEVRFFVEGAGLFCLHIGDKVYQVLCEKNDLISVPAGTPHWFDMGSEPHFTAIRIFDNPEGWIANFTGSPIAEAYPRLA.

Residues His-97, His-99, Glu-103, and His-141 each contribute to the Fe(2+) site. Ni(2+) is bound by residues His-97, His-99, Glu-103, and His-141.

Belongs to the acireductone dioxygenase (ARD) family. As to quaternary structure, monomer. Fe(2+) is required as a cofactor. Ni(2+) serves as cofactor.

The enzyme catalyses 1,2-dihydroxy-5-(methylsulfanyl)pent-1-en-3-one + O2 = 3-(methylsulfanyl)propanoate + CO + formate + 2 H(+). It carries out the reaction 1,2-dihydroxy-5-(methylsulfanyl)pent-1-en-3-one + O2 = 4-methylsulfanyl-2-oxobutanoate + formate + 2 H(+). The protein operates within amino-acid biosynthesis; L-methionine biosynthesis via salvage pathway; L-methionine from S-methyl-5-thio-alpha-D-ribose 1-phosphate: step 5/6. Functionally, catalyzes 2 different reactions between oxygen and the acireductone 1,2-dihydroxy-3-keto-5-methylthiopentene (DHK-MTPene) depending upon the metal bound in the active site. Fe-containing acireductone dioxygenase (Fe-ARD) produces formate and 2-keto-4-methylthiobutyrate (KMTB), the alpha-ketoacid precursor of methionine in the methionine recycle pathway. Ni-containing acireductone dioxygenase (Ni-ARD) produces methylthiopropionate, carbon monoxide and formate, and does not lie on the methionine recycle pathway. This Cronobacter sakazakii (strain ATCC BAA-894) (Enterobacter sakazakii) protein is Acireductone dioxygenase.